Reading from the N-terminus, the 206-residue chain is MTKRTAAKYKIDRRMGENIWGRAKSPLNRREYGPGQHGQRRKGKLSDFGTQLRAKQKLKGYYGDLTEKQFRRIYAEAERVKGDTGENLIGLLERRLDAVIYRAKFVPTIFAARQFVNHGHVEVNGKRVNIASYRVKEGDVVSIRERSRQLAIVLESVGLAERDVPDYLEVDHNKMTATFVRTPALGDVPYAVQMEPNLVVEFYAKN.

The tract at residues 23–47 (AKSPLNRREYGPGQHGQRRKGKLSD) is disordered. The 64-residue stretch at 94–157 (RRLDAVIYRA…RQLAIVLESV (64 aa)) folds into the S4 RNA-binding domain.

Belongs to the universal ribosomal protein uS4 family. Part of the 30S ribosomal subunit. Contacts protein S5. The interaction surface between S4 and S5 is involved in control of translational fidelity.

In terms of biological role, one of the primary rRNA binding proteins, it binds directly to 16S rRNA where it nucleates assembly of the body of the 30S subunit. Its function is as follows. With S5 and S12 plays an important role in translational accuracy. The chain is Small ribosomal subunit protein uS4 from Paracoccus denitrificans (strain Pd 1222).